The chain runs to 164 residues: Protein-export protein SecB (164 aa).

This sequence belongs to the SecB family. In terms of assembly, homotetramer, a dimer of dimers. One homotetramer interacts with 1 SecA dimer.

It is found in the cytoplasm. Functionally, one of the proteins required for the normal export of preproteins out of the cell cytoplasm. It is a molecular chaperone that binds to a subset of precursor proteins, maintaining them in a translocation-competent state. It also specifically binds to its receptor SecA. This chain is Protein-export protein SecB, found in Pseudomonas syringae pv. tomato (strain ATCC BAA-871 / DC3000).